We begin with the raw amino-acid sequence, 66 residues long: Large ribosomal subunit protein uL29 (66 aa).

It belongs to the universal ribosomal protein uL29 family.

In Fervidobacterium nodosum (strain ATCC 35602 / DSM 5306 / Rt17-B1), this protein is Large ribosomal subunit protein uL29.